The chain runs to 464 residues: UNC93-like protein 3 (464 aa).

11 helical membrane passes run 31–51 (VHIL…AQNL), 62–82 (ISLG…SLVV), 84–104 (LMGS…FVAA), 110–130 (WFTM…IWVG), 160–180 (EFWA…LALL), 192–212 (TLLM…MFFI), 251–271 (LLIV…WAEF), 275–295 (IVTP…YGAL), 313–333 (ITFI…WLLL), 341–361 (VLGT…DGIL), and 392–412 (IAIV…IVML).

This sequence belongs to the unc-93 family.

Its subcellular location is the membrane. The protein is UNC93-like protein 3 of Arabidopsis thaliana (Mouse-ear cress).